We begin with the raw amino-acid sequence, 44 residues long: uncharacterized protein (44 aa).

This is an uncharacterized protein from His1 virus (isolate Australia/Victoria) (His1V).